A 380-amino-acid polypeptide reads, in one-letter code: DNA-directed RNA polymerase subunit Rpo1C (380 aa).

It belongs to the RNA polymerase beta' chain family. Part of the RNA polymerase complex.

The protein resides in the cytoplasm. It carries out the reaction RNA(n) + a ribonucleoside 5'-triphosphate = RNA(n+1) + diphosphate. Its function is as follows. DNA-dependent RNA polymerase (RNAP) catalyzes the transcription of DNA into RNA using the four ribonucleoside triphosphates as substrates. Forms part of the jaw domain. The chain is DNA-directed RNA polymerase subunit Rpo1C from Archaeoglobus fulgidus (strain ATCC 49558 / DSM 4304 / JCM 9628 / NBRC 100126 / VC-16).